Reading from the N-terminus, the 130-residue chain is Small ribosomal subunit protein uS11c (130 aa).

This sequence belongs to the universal ribosomal protein uS11 family. In terms of assembly, part of the 30S ribosomal subunit.

Its subcellular location is the plastid. It localises to the chloroplast. In Phaeodactylum tricornutum (strain CCAP 1055/1), this protein is Small ribosomal subunit protein uS11c.